Consider the following 431-residue polypeptide: Glucose-1-phosphate adenylyltransferase (431 aa).

A beta-D-fructose 1,6-bisphosphate-binding site is contributed by K39. Positions 40, 46, and 52 each coordinate AMP. Y114 provides a ligand contact to alpha-D-glucose 1-phosphate. R130 contributes to the AMP binding site. Residues G179, 194-195 (EK), and S212 each bind alpha-D-glucose 1-phosphate. Residue R386 participates in AMP binding. Beta-D-fructose 1,6-bisphosphate is bound at residue 429–431 (QER).

It belongs to the bacterial/plant glucose-1-phosphate adenylyltransferase family. Homotetramer.

The catalysed reaction is alpha-D-glucose 1-phosphate + ATP + H(+) = ADP-alpha-D-glucose + diphosphate. The protein operates within glycan biosynthesis; glycogen biosynthesis. Its activity is regulated as follows. Allosterically activated by fructose-1,6-bisphosphate (F16BP) and inhibited by AMP. In terms of biological role, involved in the biosynthesis of ADP-glucose, a building block required for the elongation reactions to produce glycogen. Catalyzes the reaction between ATP and alpha-D-glucose 1-phosphate (G1P) to produce pyrophosphate and ADP-Glc. The sequence is that of Glucose-1-phosphate adenylyltransferase from Klebsiella pneumoniae subsp. pneumoniae (strain ATCC 700721 / MGH 78578).